The sequence spans 440 residues: Cytochrome b (440 aa).

The helical transmembrane segment at 46-66 (IWGIVLAFCLVLQIATGIVLV) threads the bilayer. Residues His97 and His111 each contribute to the heme b site. Helical transmembrane passes span 100 to 120 (GASL…YYGS), 129 to 149 (WIVG…GYVL), 156 to 176 (FWGA…GEAI), 194 to 214 (FFSL…VHIW), 253 to 273 (LFAL…MPNY), 296 to 315 (WYFL…VWVV), 330 to 350 (FFGV…PWLD), 365 to 385 (WWFW…AMPA), and 394 to 414 (LAGS…LGII). The heme b site is built by His198 and His212.

This sequence belongs to the cytochrome b family. As to quaternary structure, the main subunits of complex b-c1 are: cytochrome b, cytochrome c1 and the Rieske protein. Heme b serves as cofactor.

It is found in the cell membrane. Its function is as follows. Component of the ubiquinol-cytochrome c reductase complex (complex III or cytochrome b-c1 complex), which is a respiratory chain that generates an electrochemical potential coupled to ATP synthesis. This Paracoccus denitrificans protein is Cytochrome b (petB).